The sequence spans 360 residues: Phospho-N-acetylmuramoyl-pentapeptide-transferase (360 aa).

10 helical membrane passes run 24 to 44, 69 to 89, 92 to 112, 133 to 153, 158 to 178, 199 to 219, 239 to 259, 263 to 283, 288 to 308, and 337 to 357; these read RAVM…PWTI, GTPT…TLLW, WANP…ALGF, MVWQ…LAAN, ILIV…GFLV, GLAT…AYAS, VVIF…FNAY, VFMG…VAVI, FVLV…MLQV, and QVVV…LSTL.

The protein belongs to the glycosyltransferase 4 family. MraY subfamily. Mg(2+) serves as cofactor.

The protein localises to the cell inner membrane. The catalysed reaction is UDP-N-acetyl-alpha-D-muramoyl-L-alanyl-gamma-D-glutamyl-meso-2,6-diaminopimeloyl-D-alanyl-D-alanine + di-trans,octa-cis-undecaprenyl phosphate = di-trans,octa-cis-undecaprenyl diphospho-N-acetyl-alpha-D-muramoyl-L-alanyl-D-glutamyl-meso-2,6-diaminopimeloyl-D-alanyl-D-alanine + UMP. It participates in cell wall biogenesis; peptidoglycan biosynthesis. Catalyzes the initial step of the lipid cycle reactions in the biosynthesis of the cell wall peptidoglycan: transfers peptidoglycan precursor phospho-MurNAc-pentapeptide from UDP-MurNAc-pentapeptide onto the lipid carrier undecaprenyl phosphate, yielding undecaprenyl-pyrophosphoryl-MurNAc-pentapeptide, known as lipid I. This Neisseria meningitidis serogroup A / serotype 4A (strain DSM 15465 / Z2491) protein is Phospho-N-acetylmuramoyl-pentapeptide-transferase.